The following is a 734-amino-acid chain: Terpene cyclase/mutase ntnI (734 aa).

Over residues 1–12 (MQSHIGQWTSTA) the composition is skewed to polar residues. Residues 1 to 26 (MQSHIGQWTSTAKGHLSRDENGDEKT) are disordered. Over residues 16–26 (LSRDENGDEKT) the composition is skewed to basic and acidic residues. 4 PFTB repeats span residues 130 to 172 (AIEI…RLLG), 493 to 534 (LHNA…SGKT), 570 to 610 (RTRG…ALAG), and 619 to 668 (SRKG…GLMH).

It belongs to the terpene cyclase/mutase family.

Its pathway is secondary metabolite biosynthesis; terpenoid biosynthesis. Functionally, terpene cyclase/mutase; part of the gene cluster that mediates the biosynthesis of the meroterpenoids nectripenoids A and B, as well as cochliquninone D and isocochliquninone E. The pathway probably begins with the HR-PKS ntnH that catalyzes two chain-extension steps to form a reduced triketide, which then primes the SAT domain in the NR-PKS ntnG to initiate three more cycles of extension to give a linear hexaketide corresponding to the polyketide part of nectripenoids. The FAD-dependent monooxygenase ntnJ then performs an oxidative decarboxylation at C11 of the ntnH/ntnG product, via an electrophilic aromatic hydroxylation with concomitant ipso-decarboxylation. The membrane-bound polyprenyl transferase ntnF then introduces a farnesyl group before the FAD-dependent monooxygenase ntnK functions as the first epoxidase on terminal C12'-C13' olefin, followed by a second epoxidation on C7'-C8' catalyzed by ntnA. The terpene cyclase/mutase ntnI then initiates the sequential tricyclic ring formation through protonation of the terminal epoxide and catalyzes the regioselective and stereoselective 6/6/6-tricyclic ring formation. The cytochrome P450 monooxygenase ntnM may then hydroxylate C1'. The chain is Terpene cyclase/mutase ntnI from Nectria sp.